The following is a 65-amino-acid chain: Large ribosomal subunit protein bL35 (65 aa).

The protein belongs to the bacterial ribosomal protein bL35 family.

This is Large ribosomal subunit protein bL35 from Phytoplasma australiense.